A 1464-amino-acid polypeptide reads, in one-letter code: Glutamate receptor ionotropic, NMDA 2A (1464 aa).

The first 22 residues, 1–22 (MGRVGYWTLLVLPALLVWRGPA), serve as a signal peptide directing secretion. The Extracellular segment spans residues 23-556 (PSAAAEKGPP…SAFLEPFSAS (534 aa)). H44 contributes to the Zn(2+) binding site. Residue N75 is glycosylated (N-linked (GlcNAc...) asparagine). C87 and C320 are oxidised to a cystine. 3 residues coordinate Zn(2+): H128, E266, and D282. N-linked (GlcNAc...) asparagine glycans are attached at residues N340, N380, N443, and N444. 2 disulfide bridges follow: C429/C455 and C436/C456. L-glutamate contacts are provided by S511, T513, and R518. N541 is a glycosylation site (N-linked (GlcNAc...) asparagine). The helical transmembrane segment at 557–576 (VWVMMFVMLLIVSAIAVFVF) threads the bilayer. Topologically, residues 577 to 600 (EYFSPVGYNRNLAKGKAPHGPSFT) are cytoplasmic. The pore-forming stretch occupies residues 599-620 (FTIGKAIWLLWGLVFNNSVPVQ). The segment at residues 601-615 (IGKAIWLLWGLVFNN) is an intramembrane region (discontinuously helical). Over 616 to 625 (SVPVQNPKGT) the chain is Cytoplasmic. The chain crosses the membrane as a helical span at residues 626–646 (TSKIMVSVWAFFAVIFLASYT). The Extracellular segment spans residues 647-814 (ANLAAFMIQE…NEVMSSQLDI (168 aa)). N687 is a glycosylation site (N-linked (GlcNAc...) asparagine). L-glutamate-binding residues include S689, T690, and D731. A disulfide bond links C745 and C800. A helical transmembrane segment spans residues 815–835 (DNMAGVFYMLAAAMALSLITF). The Cytoplasmic segment spans residues 836–1464 (IWEHLFYWKL…KKMPSIESDV (629 aa)). 3 positions are modified to phosphoserine: S882, S890, and S929. 2 stretches are compositionally biased toward polar residues: residues 1001-1010 (STESKVNSRP) and 1023-1032 (QDSLSQNPVS). Disordered regions lie at residues 1001-1088 (STES…NFKR) and 1148-1180 (PDPY…GLSN). S1025 bears the Phosphoserine mark. Composition is skewed to basic and acidic residues over residues 1033-1043 (QRDEATAENRT) and 1052-1061 (LPEEMAHSDI). Residues S1059 and S1062 each carry the phosphoserine modification. Residues 1070-1087 (CHREPDNSKNPKTKDNFK) are compositionally biased toward basic and acidic residues. Positions 1165–1180 (LPMNRNPLQNEEGLSN) are enriched in polar residues. Phosphoserine is present on residues S1198 and S1291. Residues 1335-1372 (KLSGKKSSLFPQGLEDSKRSKSLLPDHTSDNPFLHSHR) form a disordered region. The PDZ-binding motif lies at 1462-1464 (SDV).

It belongs to the glutamate-gated ion channel (TC 1.A.10.1) family. NR2A/GRIN2A subfamily. Heterotetramer. Forms heterotetrameric channels composed of two GluN1/zeta subunits (GRIN1), and two identical GluN2/epsilon subunits (GRIN2A, GRIN2B, GRIN2C or GRIN2D) or GluN3 subunits (GRIN3A or GRIN3B) (in vitro). Can also form heterotetrameric channels that contain at least two GluN1 subunits and at least two different GluN2 subunits (or a combination of one GluN2 and one GluN3 subunits) (in vitro). In vivo, the subunit composition may depend on the expression levels of the different subunits. Found in a complex with GRIN1, GRIN3A and PPP2CB. Found in a complex with GRIN1 and GRIN3B. Interacts with AIP1. Interacts with HIP1 and NETO1. Interacts with SNX27 (via PDZ domain); the interaction is required for recycling to the plasma membrane when endocytosed and prevent degradation in lysosomes. Interacts with PDZ domains of PATJ and DLG4. Interacts with LRFN2. Interacts with RPH3A and DLG4; this ternary complex regulates NMDA receptor composition at postsynaptic membranes. Interacts with SORCS2. Interacts with ARC; preventing ARC oligomerization. Interacts (via the extreme C-terminus) with FRMPD2 (the second PDZ domain); the interaction is direct and is likely to promote NMDAR-mediated neural signal transmission. GRIN2A binds FRMPD2 with lower affinity than GRIN2B.

The protein resides in the cell projection. The protein localises to the dendritic spine. It is found in the cell membrane. It localises to the synapse. Its subcellular location is the postsynaptic cell membrane. The protein resides in the cytoplasmic vesicle membrane. It catalyses the reaction Ca(2+)(in) = Ca(2+)(out). The enzyme catalyses Na(+)(in) = Na(+)(out). The catalysed reaction is K(+)(in) = K(+)(out). Component of N-methyl-D-aspartate (NMDA) receptors (NMDARs) that function as heterotetrameric, ligand-gated cation channels with high calcium permeability and voltage-dependent block by Mg(2+). NMDARs participate in synaptic plasticity for learning and memory formation by contributing to the slow phase of excitatory postsynaptic current, long-term synaptic potentiation, and learning. Channel activation requires binding of the neurotransmitter L-glutamate to the GluN2 subunit, glycine or D-serine binding to the GluN1 subunit, plus membrane depolarization to eliminate channel inhibition by Mg(2+). NMDARs mediate simultaneously the potasium efflux and the influx of calcium and sodium. Each GluN2 subunit confers differential attributes to channel properties, including activation, deactivation and desensitization kinetics, pH sensitivity, Ca2(+) permeability, and binding to allosteric modulators. Participates in the synaptic plasticity regulation through activation by the L-glutamate releaseed by BEST1, into the synaptic cleft, upon F2R/PAR-1 activation in astrocyte. This chain is Glutamate receptor ionotropic, NMDA 2A, found in Pan troglodytes (Chimpanzee).